Consider the following 465-residue polypeptide: UDP-N-acetylmuramate--L-alanine ligase (465 aa).

115–121 contacts ATP; it reads GAHGKTT.

The protein belongs to the MurCDEF family.

The protein localises to the cytoplasm. It carries out the reaction UDP-N-acetyl-alpha-D-muramate + L-alanine + ATP = UDP-N-acetyl-alpha-D-muramoyl-L-alanine + ADP + phosphate + H(+). It participates in cell wall biogenesis; peptidoglycan biosynthesis. Its function is as follows. Cell wall formation. This Coxiella burnetii (strain Dugway 5J108-111) protein is UDP-N-acetylmuramate--L-alanine ligase.